Here is a 541-residue protein sequence, read N- to C-terminus: 2-succinyl-5-enolpyruvyl-6-hydroxy-3-cyclohexene-1-carboxylate synthase (541 aa).

It belongs to the TPP enzyme family. MenD subfamily. As to quaternary structure, homodimer. Mg(2+) serves as cofactor. Requires Mn(2+) as cofactor. Thiamine diphosphate is required as a cofactor.

It catalyses the reaction isochorismate + 2-oxoglutarate + H(+) = 5-enolpyruvoyl-6-hydroxy-2-succinyl-cyclohex-3-ene-1-carboxylate + CO2. It functions in the pathway quinol/quinone metabolism; 1,4-dihydroxy-2-naphthoate biosynthesis; 1,4-dihydroxy-2-naphthoate from chorismate: step 2/7. The protein operates within quinol/quinone metabolism; menaquinone biosynthesis. Its function is as follows. Catalyzes the thiamine diphosphate-dependent decarboxylation of 2-oxoglutarate and the subsequent addition of the resulting succinic semialdehyde-thiamine pyrophosphate anion to isochorismate to yield 2-succinyl-5-enolpyruvyl-6-hydroxy-3-cyclohexene-1-carboxylate (SEPHCHC). The chain is 2-succinyl-5-enolpyruvyl-6-hydroxy-3-cyclohexene-1-carboxylate synthase from Leuconostoc mesenteroides subsp. mesenteroides (strain ATCC 8293 / DSM 20343 / BCRC 11652 / CCM 1803 / JCM 6124 / NCDO 523 / NBRC 100496 / NCIMB 8023 / NCTC 12954 / NRRL B-1118 / 37Y).